The following is a 233-amino-acid chain: Probable chemoreceptor glutamine deamidase CheD (233 aa).

The protein belongs to the CheD family.

The enzyme catalyses L-glutaminyl-[protein] + H2O = L-glutamyl-[protein] + NH4(+). Functionally, probably deamidates glutamine residues to glutamate on methyl-accepting chemotaxis receptors (MCPs), playing an important role in chemotaxis. The protein is Probable chemoreceptor glutamine deamidase CheD of Vibrio cholerae serotype O1 (strain ATCC 39315 / El Tor Inaba N16961).